The sequence spans 257 residues: General L-amino acid transport ATP-binding protein AapP (257 aa).

The region spanning 18-252 (VEIVNMNKWY…PQHERTKLFL (235 aa)) is the ABC transporter domain. 50 to 57 (GPSGSGKS) serves as a coordination point for ATP.

Belongs to the ABC transporter superfamily.

Functionally, part of a binding-protein-dependent transport system for L-amino acids, affects the uptake as well as the efflux of these amino acids. Probably responsible for energy coupling to the transport system. The polypeptide is General L-amino acid transport ATP-binding protein AapP (aapP) (Rhizobium johnstonii (strain DSM 114642 / LMG 32736 / 3841) (Rhizobium leguminosarum bv. viciae)).